Consider the following 994-residue polypeptide: Sarcoplasmic/endoplasmic reticulum calcium ATPase 1 (994 aa).

Over 1–48 (MEAAHSKSTEECLSYFGVSETTGLTPDQVKRHLEKYGPNELPAEEGKS) the chain is Cytoplasmic. A helical transmembrane segment spans residues 49–69 (LWELVVEQFEDLLVRILLLAA). Topologically, residues 70 to 89 (CISFVLAWFEEGEETVTAFV) are lumenal. Residues 90–110 (EPFVILLILIANAIVGVWQER) traverse the membrane as a helical segment. Topologically, residues 111–253 (NAENAIEALK…QDKTPLQQKL (143 aa)) are cytoplasmic. Residues 254 to 273 (DEFGEQLSKVISLICVAVWL) form a helical membrane-spanning segment. Over 274–295 (INIGHFNDPVHGGSWFRGAIYY) the chain is Lumenal. Residues 296–313 (FKIAVALAVAAIPEGLPA) traverse the membrane as a helical segment. Valine 304, alanine 305, isoleucine 307, and glutamate 309 together coordinate Ca(2+). Residues 314-757 (VITTCLALGT…EEGRAIYNNM (444 aa)) are Cytoplasmic-facing. Aspartate 351 functions as the 4-aspartylphosphate intermediate in the catalytic mechanism. Mg(2+) is bound by residues aspartate 351 and threonine 353. Threonine 353 is a binding site for ATP. Threonine 441 bears the Phosphothreonine mark. ATP contacts are provided by glutamate 442, arginine 489, lysine 515, and arginine 560. Residue threonine 569 is modified to Phosphothreonine. Phosphoserine is present on serine 581. ATP is bound by residues threonine 625, glycine 626, and aspartate 627. The residue at position 643 (serine 643) is a Phosphoserine. ATP contacts are provided by arginine 678 and lysine 684. Aspartate 703 provides a ligand contact to Mg(2+). Asparagine 706 is an ATP binding site. The chain crosses the membrane as a helical span at residues 758-777 (KQFIRYLISSNVGEVVCIFL). Ca(2+) contacts are provided by asparagine 768 and glutamate 771. The Lumenal portion of the chain corresponds to 778–787 (TAALGLPEAL). The helical transmembrane segment at 788-808 (IPVQLLWVNLVTDGLPATALG) threads the bilayer. The tract at residues 788–808 (IPVQLLWVNLVTDGLPATALG) is interaction with PLN. Residues asparagine 796, threonine 799, and aspartate 800 each contribute to the Ca(2+) site. At 809 to 828 (FNPPDLDIMDRPPRSPKEPL) the chain is on the cytoplasmic side. The chain crosses the membrane as a helical span at residues 829 to 851 (ISGWLFFRYMAIGGYVGAATVGA). Topologically, residues 852–897 (AAWWFLYAEDGPHVSYHQLTHFMQCTEHNPEFDGLDCEVFEAPEPM) are lumenal. A disulfide bridge links cysteine 876 with cysteine 888. Residues 898–917 (TMALSVLVTIEMCNALNSLS) form a helical membrane-spanning segment. Position 908 (glutamate 908) interacts with Ca(2+). At 918–930 (ENQSLLRMPPWVN) the chain is on the cytoplasmic side. A helical transmembrane segment spans residues 931–949 (IWLLGSICLSMSLHFLILY). The tract at residues 932–943 (WLLGSICLSMSL) is interaction with PLN. Residues 950 to 964 (VDPLPMIFKLRALDF) are Lumenal-facing. Residues 965–985 (TQWLMVLKISLPVIGLDELLK) traverse the membrane as a helical segment. At 986–994 (FIARNYLEG) the chain is on the cytoplasmic side.

It belongs to the cation transport ATPase (P-type) (TC 3.A.3) family. Type IIA subfamily. Interacts with sarcolipin (SLN). Interacts with phospholamban (PLN). Interacts with myoregulin (MRLN). Interacts with DWORF. Interacts with VMP1. The cofactor is Mg(2+).

It is found in the endoplasmic reticulum membrane. It localises to the sarcoplasmic reticulum membrane. The catalysed reaction is Ca(2+)(in) + ATP + H2O = Ca(2+)(out) + ADP + phosphate + H(+). With respect to regulation, inhibited by sarcolipin (SLN) and myoregulin (MRLN). Has also been shown to be reversibly inhibited by phospholamban (PLN) at low calcium concentrations in vitro. Dephosphorylated PLN decreases the apparent affinity of the ATPase for calcium in vitro and this inhibition is regulated by the phosphorylation of PLN. Enhanced by DWORF; DWORF increases activity by displacing sarcolipin (SLN), phospholamban (PLN) and myoregulin (MRLN). Key regulator of striated muscle performance by acting as the major Ca(2+) ATPase responsible for the reuptake of cytosolic Ca(2+) into the sarcoplasmic reticulum. Catalyzes the hydrolysis of ATP coupled with the translocation of calcium from the cytosol to the sarcoplasmic reticulum lumen. Contributes to calcium sequestration involved in muscular excitation/contraction. The polypeptide is Sarcoplasmic/endoplasmic reticulum calcium ATPase 1 (Atp2a1) (Mus musculus (Mouse)).